A 400-amino-acid polypeptide reads, in one-letter code: MELSLYRELPRKRRAVAQPRTRQPPPKVHREDTGIVPGLRVESSVRPDSITNFRRLAAVKFKNPEVMECGGKGGCEECKTRPALMLNCDCDTAKVPICLGCKPRAVRDHPCFRNRTCVSCGTIGVVAVVKLGCCGATLCDSCLGADWYPKSRTRGTCGYCGAQTLGVHYRPMKIIKNTRPYIPAETPIPKVQRHISARLLEEIRRCQLSRSEIVSLFGDHGSMMEYPTAVPAHLLAPKMIGYSDISKAFADDTLPRCSRAMCAANGVPGWRCGFQAPVLFPGMDMCLLCVVRAQEQTITQLVLNGTIWEDAPIAGTYHMSVWLDPTTVSVTPVDISAIDTFAVEFCGNLGSHHPEKFYRLSDLTCRIRWTAGGFLDPESLMVPEKERLKNTASAHSNNSH.

The disordered stretch occupies residues 9-33 (LPRKRRAVAQPRTRQPPPKVHREDT).

The chain is Putative zinc-binding protein ORF78 (ORF78) from Ictalurid herpesvirus 1 (strain Auburn) (IcHV-1).